A 204-amino-acid chain; its full sequence is Inactive ribonuclease-like protein 9 (204 aa).

The first 26 residues, Met1–Phe26, serve as a signal peptide directing secretion. 3 disulfides stabilise this stretch: Cys97-Cys152, Cys115-Cys167, and Cys122-Cys129. 2 N-linked (GlcNAc...) asparagine glycosylation sites follow: Asn130 and Asn142.

This sequence belongs to the pancreatic ribonuclease family.

The protein resides in the secreted. In terms of biological role, does not exhibit any ribonuclease activity. The chain is Inactive ribonuclease-like protein 9 (RNASE9) from Macaca mulatta (Rhesus macaque).